A 257-amino-acid polypeptide reads, in one-letter code: tRNA uridine(34) hydroxylase (257 aa).

Positions N128 to Y222 constitute a Rhodanese domain. C182 serves as the catalytic Cysteine persulfide intermediate.

Belongs to the TrhO family.

The enzyme catalyses uridine(34) in tRNA + AH2 + O2 = 5-hydroxyuridine(34) in tRNA + A + H2O. Functionally, catalyzes oxygen-dependent 5-hydroxyuridine (ho5U) modification at position 34 in tRNAs. The sequence is that of tRNA uridine(34) hydroxylase from Xylella fastidiosa (strain 9a5c).